Here is a 342-residue protein sequence, read N- to C-terminus: Serine/threonine-protein kinase-transforming protein mos (342 aa).

Residues 63–338 (VCLMHRLGSG…LLQRDLKAFR (276 aa)) form the Protein kinase domain. ATP is bound by residues 69–77 (LGSGGFGSV) and Lys-90. Asp-198 functions as the Proton acceptor in the catalytic mechanism.

The protein belongs to the protein kinase superfamily. Ser/Thr protein kinase family.

The catalysed reaction is L-seryl-[protein] + ATP = O-phospho-L-seryl-[protein] + ADP + H(+). The enzyme catalyses L-threonyl-[protein] + ATP = O-phospho-L-threonyl-[protein] + ADP + H(+). This is Serine/threonine-protein kinase-transforming protein mos (V-MOS) from Myeloproliferative sarcoma virus (isolate ts159).